The sequence spans 421 residues: Forkhead box protein J1 (421 aa).

Disordered regions lie at residues M1 to T34 and K48 to T116. Over residues P66–A80 the composition is skewed to low complexity. The span at K90–S99 shows a compositional bias: polar residues. The segment at residues V120–F210 is a DNA-binding region (fork-head). The tract at residues A261–L302 is disordered. Residues G271–K284 are compositionally biased toward basic residues.

The protein belongs to the FOXJ1 family. As to expression, testis, oviduct, lung and brain cortex.

It is found in the nucleus. In terms of biological role, transcription factor specifically required for the formation of motile cilia. Acts by activating transcription of genes that mediate assembly of motile cilia, such as CFAP157. Binds the DNA consensus sequences 5'-HWDTGTTTGTTTA-3' or 5'-KTTTGTTGTTKTW-3' (where H is not G, W is A or T, D is not C, and K is G or T). Activates the transcription of a variety of ciliary proteins in the developing brain and lung. In Homo sapiens (Human), this protein is Forkhead box protein J1.